An 88-amino-acid polypeptide reads, in one-letter code: Small ribosomal subunit protein bS16c (88 aa).

Component of the chloroplast small ribosomal subunit (SSU). Mature 70S chloroplast ribosomes of higher plants consist of a small (30S) and a large (50S) subunit. The 30S small subunit contains 1 molecule of ribosomal RNA (16S rRNA) and 24 different proteins. The 50S large subunit contains 3 rRNA molecules (23S, 5S and 4.5S rRNA) and 33 different proteins.

It is found in the plastid. It localises to the chloroplast. In terms of biological role, component of the chloroplast ribosome (chloro-ribosome), a dedicated translation machinery responsible for the synthesis of chloroplast genome-encoded proteins, including proteins of the transcription and translation machinery and components of the photosynthetic apparatus. In Spinacia oleracea (Spinach), this protein is Small ribosomal subunit protein bS16c.